Here is a 170-residue protein sequence, read N- to C-terminus: Flavodoxin (170 aa).

The 161-residue stretch at 5–165 (IGLFYGTQTG…RIKSWVAQLK (161 aa)) folds into the Flavodoxin-like domain.

The protein belongs to the flavodoxin family. The cofactor is FMN.

Functionally, low-potential electron donor to a number of redox enzymes. The sequence is that of Flavodoxin (isiB) from Nostoc sp. (strain PCC 7120 / SAG 25.82 / UTEX 2576).